Consider the following 61-residue polypeptide: Small ribosomal subunit protein uS14 (61 aa).

Zn(2+) is bound by residues C24, C27, C40, and C43.

It belongs to the universal ribosomal protein uS14 family. Zinc-binding uS14 subfamily. In terms of assembly, part of the 30S ribosomal subunit. Contacts proteins S3 and S10. Requires Zn(2+) as cofactor.

Its function is as follows. Binds 16S rRNA, required for the assembly of 30S particles and may also be responsible for determining the conformation of the 16S rRNA at the A site. In Geobacillus stearothermophilus (Bacillus stearothermophilus), this protein is Small ribosomal subunit protein uS14.